The primary structure comprises 196 residues: GTP cyclohydrolase 1 (196 aa).

Positions 85, 88, and 158 each coordinate Zn(2+).

The protein belongs to the GTP cyclohydrolase I family. In terms of assembly, homomer.

It carries out the reaction GTP + H2O = 7,8-dihydroneopterin 3'-triphosphate + formate + H(+). Its pathway is cofactor biosynthesis; 7,8-dihydroneopterin triphosphate biosynthesis; 7,8-dihydroneopterin triphosphate from GTP: step 1/1. The protein is GTP cyclohydrolase 1 of Corynebacterium aurimucosum (strain ATCC 700975 / DSM 44827 / CIP 107346 / CN-1) (Corynebacterium nigricans).